Here is a 144-residue protein sequence, read N- to C-terminus: Large ribosomal subunit protein uL13 (144 aa).

The interval 125 to 144 (YRGPEHPHQAQKPQPLEVKA) is disordered.

It belongs to the universal ribosomal protein uL13 family. As to quaternary structure, part of the 50S ribosomal subunit.

Functionally, this protein is one of the early assembly proteins of the 50S ribosomal subunit, although it is not seen to bind rRNA by itself. It is important during the early stages of 50S assembly. The sequence is that of Large ribosomal subunit protein uL13 from Aquifex aeolicus (strain VF5).